Reading from the N-terminus, the 284-residue chain is Nucleotide-binding protein Sputw3181_3461 (284 aa).

Residue 8 to 15 participates in ATP binding; that stretch reads GRSGSGKS. Position 56 to 59 (56 to 59) interacts with GTP; sequence DVRN.

This sequence belongs to the RapZ-like family.

In terms of biological role, displays ATPase and GTPase activities. The chain is Nucleotide-binding protein Sputw3181_3461 from Shewanella sp. (strain W3-18-1).